Here is a 137-residue protein sequence, read N- to C-terminus: Phosphoribosyl-AMP cyclohydrolase (137 aa).

Residue Asp-84 participates in Mg(2+) binding. Cys-85 serves as a coordination point for Zn(2+). Residues Asp-86 and Asp-88 each coordinate Mg(2+). Zn(2+) contacts are provided by Cys-101 and Cys-108.

The protein belongs to the PRA-CH family. In terms of assembly, homodimer. Mg(2+) is required as a cofactor. Requires Zn(2+) as cofactor.

Its subcellular location is the cytoplasm. The catalysed reaction is 1-(5-phospho-beta-D-ribosyl)-5'-AMP + H2O = 1-(5-phospho-beta-D-ribosyl)-5-[(5-phospho-beta-D-ribosylamino)methylideneamino]imidazole-4-carboxamide. It functions in the pathway amino-acid biosynthesis; L-histidine biosynthesis; L-histidine from 5-phospho-alpha-D-ribose 1-diphosphate: step 3/9. Catalyzes the hydrolysis of the adenine ring of phosphoribosyl-AMP. The chain is Phosphoribosyl-AMP cyclohydrolase from Chlorobaculum tepidum (strain ATCC 49652 / DSM 12025 / NBRC 103806 / TLS) (Chlorobium tepidum).